The chain runs to 350 residues: Hydroxymethylglutaryl-CoA synthase (350 aa).

Glu83 (proton donor/acceptor) is an active-site residue. Catalysis depends on Cys115, which acts as the Acyl-thioester intermediate. (3S)-3-hydroxy-3-methylglutaryl-CoA is bound by residues Cys115 and Thr156. Position 204 (Arg204) interacts with CoA. Positions 206 and 239 each coordinate (3S)-3-hydroxy-3-methylglutaryl-CoA. The active-site Proton donor/acceptor is His239. Lys244 contacts CoA. (3S)-3-hydroxy-3-methylglutaryl-CoA is bound by residues Asn271 and Ser301.

Belongs to the thiolase-like superfamily. Archaeal HMG-CoA synthase family. As to quaternary structure, interacts with acetoacetyl-CoA thiolase that catalyzes the precedent step in the pathway and with a DUF35 protein. The acetoacetyl-CoA thiolase/HMG-CoA synthase complex channels the intermediate via a fused CoA-binding site, which allows for efficient coupling of the endergonic thiolase reaction with the exergonic HMGCS reaction.

It catalyses the reaction acetoacetyl-CoA + acetyl-CoA + H2O = (3S)-3-hydroxy-3-methylglutaryl-CoA + CoA + H(+). It participates in metabolic intermediate biosynthesis; (R)-mevalonate biosynthesis; (R)-mevalonate from acetyl-CoA: step 2/3. Catalyzes the condensation of acetyl-CoA with acetoacetyl-CoA to form 3-hydroxy-3-methylglutaryl-CoA (HMG-CoA). Functions in the mevalonate (MVA) pathway leading to isopentenyl diphosphate (IPP), a key precursor for the biosynthesis of isoprenoid compounds that are building blocks of archaeal membrane lipids. This Thermococcus kodakarensis (strain ATCC BAA-918 / JCM 12380 / KOD1) (Pyrococcus kodakaraensis (strain KOD1)) protein is Hydroxymethylglutaryl-CoA synthase.